We begin with the raw amino-acid sequence, 334 residues long: UDP-N-acetylglucosamine 4,6-dehydratase (inverting) (334 aa).

NADP(+)-binding positions include 13–16 (TGSF), 37–42 (SRDELK), 61–62 (DV), Ala81, Lys85, and 123–124 (LS). Substrate is bound at residue Lys85. Lys127 is an active-site residue. The NADP(+) site is built by Tyr135 and Lys139. Asn167 serves as a coordination point for substrate. 168–172 (VVGSR) contacts NADP(+). Substrate contacts are provided by Val175, Thr193, Arg252, and Glu255.

It belongs to the polysaccharide synthase family. As to quaternary structure, homohexamer. It depends on NADP(+) as a cofactor.

It carries out the reaction UDP-N-acetyl-alpha-D-glucosamine = UDP-2-acetamido-2,6-dideoxy-beta-L-arabino-hex-4-ulose + H2O. In terms of biological role, catalyzes the first step in the biosynthesis of pseudaminic acid, a sialic-acid-like sugar that is used to modify flagellin. Has both C6 dehydratase and C5 epimerase activities that result in the production of both UDP-2-acetamido-2,6-dideoxy-beta-L-arabino-4-hexulose and UDP-2-acetamido-2,6-dideoxy-alpha-D-xylo-4-hexulose. This Campylobacter jejuni subsp. jejuni serotype O:23/36 (strain 81-176) protein is UDP-N-acetylglucosamine 4,6-dehydratase (inverting) (pseB).